We begin with the raw amino-acid sequence, 561 residues long: Malate synthase, glyoxysomal (561 aa).

The active-site Proton acceptor is R177. The Proton donor role is filled by D462. A Microbody targeting signal motif is present at residues 559 to 561 (SRL).

It belongs to the malate synthase family.

The protein localises to the glyoxysome. It catalyses the reaction glyoxylate + acetyl-CoA + H2O = (S)-malate + CoA + H(+). Its pathway is carbohydrate metabolism; glyoxylate cycle; (S)-malate from isocitrate: step 2/2. This chain is Malate synthase, glyoxysomal, found in Brassica napus (Rape).